We begin with the raw amino-acid sequence, 378 residues long: Succinyl-diaminopimelate desuccinylase (378 aa).

H68 provides a ligand contact to Zn(2+). The active site involves D70. D101 is a Zn(2+) binding site. Catalysis depends on E135, which acts as the Proton acceptor. Zn(2+)-binding residues include E136, E164, and H350.

Belongs to the peptidase M20A family. DapE subfamily. Homodimer. Requires Zn(2+) as cofactor. It depends on Co(2+) as a cofactor.

It catalyses the reaction N-succinyl-(2S,6S)-2,6-diaminopimelate + H2O = (2S,6S)-2,6-diaminopimelate + succinate. Its pathway is amino-acid biosynthesis; L-lysine biosynthesis via DAP pathway; LL-2,6-diaminopimelate from (S)-tetrahydrodipicolinate (succinylase route): step 3/3. Its function is as follows. Catalyzes the hydrolysis of N-succinyl-L,L-diaminopimelic acid (SDAP), forming succinate and LL-2,6-diaminopimelate (DAP), an intermediate involved in the bacterial biosynthesis of lysine and meso-diaminopimelic acid, an essential component of bacterial cell walls. This chain is Succinyl-diaminopimelate desuccinylase, found in Vibrio parahaemolyticus serotype O3:K6 (strain RIMD 2210633).